A 336-amino-acid polypeptide reads, in one-letter code: Galactose/methyl galactoside import permease protein MglC (336 aa).

A run of 9 helical transmembrane segments spans residues 17–37 (GIYV…PTFL), 53–73 (IIIA…LSAG), 107–127 (LVIL…GIII), 128–148 (AYLN…VYGI), 181–201 (FRLS…WVLW), 227–247 (VALN…FGGL), 257–277 (TNNL…VGGV), 279–299 (FSGG…FTVI), and 306–326 (IGVN…FAVA).

Belongs to the binding-protein-dependent transport system permease family. AraH/RbsC subfamily. The complex is composed of one ATP-binding protein (MglA), two transmembrane proteins (MglC) and a solute-binding protein (MglB).

The protein resides in the cell inner membrane. Functionally, part of the ABC transporter complex MglABC involved in galactose/methyl galactoside import. Probably responsible for the translocation of the substrate across the membrane. This is Galactose/methyl galactoside import permease protein MglC (mglC) from Salmonella typhimurium (strain LT2 / SGSC1412 / ATCC 700720).